Reading from the N-terminus, the 325-residue chain is Elongation factor P--(R)-beta-lysine ligase (325 aa).

76–78 provides a ligand contact to substrate; the sequence is SPE. Residues 100–102 and Asn-109 each bind ATP; that span reads RNE. Tyr-118 provides a ligand contact to substrate. 244-245 is a binding site for ATP; that stretch reads EL. Residue Glu-251 coordinates substrate. Gly-300 is an ATP binding site.

Belongs to the class-II aminoacyl-tRNA synthetase family. EpmA subfamily. Homodimer.

It carries out the reaction D-beta-lysine + L-lysyl-[protein] + ATP = N(6)-((3R)-3,6-diaminohexanoyl)-L-lysyl-[protein] + AMP + diphosphate + H(+). Its function is as follows. With EpmB is involved in the beta-lysylation step of the post-translational modification of translation elongation factor P (EF-P) on 'Lys-34'. Catalyzes the ATP-dependent activation of (R)-beta-lysine produced by EpmB, forming a lysyl-adenylate, from which the beta-lysyl moiety is then transferred to the epsilon-amino group of EF-P 'Lys-34'. The protein is Elongation factor P--(R)-beta-lysine ligase of Salmonella arizonae (strain ATCC BAA-731 / CDC346-86 / RSK2980).